Consider the following 87-residue polypeptide: RNA-binding protein Hfq (87 aa).

The 60-residue stretch at Asp9–Val68 folds into the Sm domain. Residues Ala65–Glu87 are disordered. Basic and acidic residues predominate over residues His71–Glu87.

The protein belongs to the Hfq family.

Functionally, RNA chaperone that binds small regulatory RNA (sRNAs) and mRNAs to facilitate mRNA translational regulation in response to envelope stress, environmental stress and changes in metabolite concentrations. Also binds with high specificity to tRNAs. Essential for virulence in the suckling mouse model of cholera pathogenesis. The protein is RNA-binding protein Hfq of Vibrio cholerae serotype O1 (strain ATCC 39315 / El Tor Inaba N16961).